The sequence spans 282 residues: Shikimate dehydrogenase (NADP(+)) (282 aa).

Residues 15 to 17 (SKS) and Thr-62 contribute to the shikimate site. Residue Lys-66 is the Proton acceptor of the active site. Shikimate contacts are provided by Asn-87 and Asp-103. Residues 128–132 (GAGGA), 152–157 (NRTPAK), and Met-216 each bind NADP(+). Tyr-218 contributes to the shikimate binding site. NADP(+) is bound at residue Gly-240.

This sequence belongs to the shikimate dehydrogenase family. Homodimer.

The catalysed reaction is shikimate + NADP(+) = 3-dehydroshikimate + NADPH + H(+). It participates in metabolic intermediate biosynthesis; chorismate biosynthesis; chorismate from D-erythrose 4-phosphate and phosphoenolpyruvate: step 4/7. Its function is as follows. Involved in the biosynthesis of the chorismate, which leads to the biosynthesis of aromatic amino acids. Catalyzes the reversible NADPH linked reduction of 3-dehydroshikimate (DHSA) to yield shikimate (SA). This Nitrosococcus oceani (strain ATCC 19707 / BCRC 17464 / JCM 30415 / NCIMB 11848 / C-107) protein is Shikimate dehydrogenase (NADP(+)).